A 129-amino-acid polypeptide reads, in one-letter code: Protein Turandot B1 (129 aa).

The signal sequence occupies residues 1–21 (MNSATSLMCFALLLISPLCMG).

It belongs to the Turandot family.

The protein localises to the secreted. Functionally, a humoral factor that may play a role in stress tolerance. This chain is Protein Turandot B1 (TotB1), found in Drosophila erecta (Fruit fly).